An 85-amino-acid chain; its full sequence is ATP synthase subunit c (85 aa).

2 helical membrane passes run 19–39 and 62–82; these read LGAA…IGKI and IIAA…CLLV.

The protein belongs to the ATPase C chain family. In terms of assembly, F-type ATPases have 2 components, F(1) - the catalytic core - and F(0) - the membrane proton channel. F(1) has five subunits: alpha(3), beta(3), gamma(1), delta(1), epsilon(1). F(0) has three main subunits: a(1), b(2) and c(10-14). The alpha and beta chains form an alternating ring which encloses part of the gamma chain. F(1) is attached to F(0) by a central stalk formed by the gamma and epsilon chains, while a peripheral stalk is formed by the delta and b chains.

The protein resides in the cell inner membrane. Its function is as follows. F(1)F(0) ATP synthase produces ATP from ADP in the presence of a proton or sodium gradient. F-type ATPases consist of two structural domains, F(1) containing the extramembraneous catalytic core and F(0) containing the membrane proton channel, linked together by a central stalk and a peripheral stalk. During catalysis, ATP synthesis in the catalytic domain of F(1) is coupled via a rotary mechanism of the central stalk subunits to proton translocation. In terms of biological role, key component of the F(0) channel; it plays a direct role in translocation across the membrane. A homomeric c-ring of between 10-14 subunits forms the central stalk rotor element with the F(1) delta and epsilon subunits. This chain is ATP synthase subunit c, found in Bacteroides fragilis (strain ATCC 25285 / DSM 2151 / CCUG 4856 / JCM 11019 / LMG 10263 / NCTC 9343 / Onslow / VPI 2553 / EN-2).